We begin with the raw amino-acid sequence, 289 residues long: Shikimate dehydrogenase (NADP(+)) (289 aa).

Shikimate-binding positions include 22-24 and threonine 69; that span reads SRS. The active-site Proton acceptor is lysine 73. An NADP(+)-binding site is contributed by glutamate 85. Shikimate-binding residues include asparagine 94 and aspartate 109. NADP(+) is bound by residues 134–138, 158–163, and isoleucine 226; these read GAGGA and NRTLSR. Position 228 (tyrosine 228) interacts with shikimate. Residue glycine 249 participates in NADP(+) binding.

Belongs to the shikimate dehydrogenase family. Homodimer.

The enzyme catalyses shikimate + NADP(+) = 3-dehydroshikimate + NADPH + H(+). Its pathway is metabolic intermediate biosynthesis; chorismate biosynthesis; chorismate from D-erythrose 4-phosphate and phosphoenolpyruvate: step 4/7. Involved in the biosynthesis of the chorismate, which leads to the biosynthesis of aromatic amino acids. Catalyzes the reversible NADPH linked reduction of 3-dehydroshikimate (DHSA) to yield shikimate (SA). The chain is Shikimate dehydrogenase (NADP(+)) from Brucella ovis (strain ATCC 25840 / 63/290 / NCTC 10512).